Consider the following 675-residue polypeptide: Putative elongation factor TypA-like SVR3, chloroplastic (675 aa).

A chloroplast-targeting transit peptide spans 1–58 (MELSLSTSSASPAVLRRQASPLLHKQQVLGVSFASALKPGGGALRFPSRRPLPRPITC). The disordered stretch occupies residues 43 to 76 (ALRFPSRRPLPRPITCSASPSTAEPASEVKKKQL). Residues 59 to 68 (SASPSTAEPA) are compositionally biased toward low complexity. The tr-type G domain maps to 80 to 275 (DNVRNIAIVA…AIIRCVPGPN (196 aa)).

Belongs to the TRAFAC class translation factor GTPase superfamily. Classic translation factor GTPase family. BipA subfamily.

It localises to the plastid. Its subcellular location is the chloroplast. In terms of biological role, putative chloroplastic elongation factor involved in response to chilling stress. Required for proper chloroplast rRNA processing and/or translation at low temperature. Involved in plastid protein homeostasis. In Arabidopsis thaliana (Mouse-ear cress), this protein is Putative elongation factor TypA-like SVR3, chloroplastic (SVR3).